Here is a 501-residue protein sequence, read N- to C-terminus: Glycerol kinase (501 aa).

Position 17 (threonine 17) interacts with ADP. The ATP site is built by threonine 17, threonine 18, and serine 19. Sn-glycerol 3-phosphate is bound at residue threonine 17. ADP is bound at residue arginine 21. The sn-glycerol 3-phosphate site is built by arginine 87, glutamate 88, tyrosine 139, and aspartate 243. Glycerol contacts are provided by arginine 87, glutamate 88, tyrosine 139, aspartate 243, and glutamine 244. ADP-binding residues include threonine 265 and glycine 308. Residues threonine 265, glycine 308, glutamine 312, and glycine 409 each contribute to the ATP site. ADP-binding residues include glycine 409 and asparagine 413.

Belongs to the FGGY kinase family.

It catalyses the reaction glycerol + ATP = sn-glycerol 3-phosphate + ADP + H(+). The protein operates within polyol metabolism; glycerol degradation via glycerol kinase pathway; sn-glycerol 3-phosphate from glycerol: step 1/1. Inhibited by fructose 1,6-bisphosphate (FBP). In terms of biological role, key enzyme in the regulation of glycerol uptake and metabolism. Catalyzes the phosphorylation of glycerol to yield sn-glycerol 3-phosphate. The protein is Glycerol kinase of Pseudomonas savastanoi pv. phaseolicola (strain 1448A / Race 6) (Pseudomonas syringae pv. phaseolicola (strain 1448A / Race 6)).